Here is a 660-residue protein sequence, read N- to C-terminus: Poly(A)-specific ribonuclease PARN (660 aa).

Positions 28 and 30 each coordinate a divalent metal cation. Residues Arg177–Asp243 form the R3H domain. The a divalent metal cation site is built by Asp290 and Asp380. A phosphoserine mark is found at Ser560 and Ser614. The tract at residues Ala606–Trp660 is disordered. The segment covering Lys633–Lys642 has biased composition (basic residues). Ser643 is modified (phosphoserine). Position 649 is a phosphothreonine (Thr649).

It belongs to the CAF1 family. Requires a divalent metal cation as cofactor.

Its subcellular location is the cytoplasm. The protein localises to the nucleus. The catalysed reaction is Exonucleolytic cleavage of poly(A) to 5'-AMP.. In terms of biological role, 3'-exoribonuclease that has a preference for poly(A) tails of mRNAs, thereby efficiently degrading poly(A) tails. Exonucleolytic degradation of the poly(A) tail is often the first step in the decay of eukaryotic mRNAs and is also used to silence certain maternal mRNAs translationally during oocyte maturation and early embryonic development. This Danio rerio (Zebrafish) protein is Poly(A)-specific ribonuclease PARN (parn).